Reading from the N-terminus, the 439-residue chain is Probable threonine protease PRSS50 (439 aa).

2 disordered regions span residues methionine 1 to alanine 22 and glutamate 48 to proline 130. Positions methionine 1–glycine 47 are cleaved as a signal peptide. A compositionally biased stretch (low complexity) spans valine 9–glycine 21. Residues glutamate 48 to proline 415 lie on the Extracellular side of the membrane. A compositionally biased stretch (basic residues) spans arginine 51 to proline 61. Positions glutamine 112–threonine 127 are enriched in low complexity. Asparagine 116 and asparagine 187 each carry an N-linked (GlcNAc...) asparagine glycan. One can recognise a Peptidase S1 domain in the interval phenylalanine 157–serine 412. A disulfide bridge links cysteine 192 with cysteine 208. Residue histidine 207 is the Charge relay system of the active site. N-linked (GlcNAc...) asparagine glycosylation occurs at asparagine 226. Aspartate 260 (charge relay system) is an active-site residue. 3 cysteine pairs are disulfide-bonded: cysteine 294–cysteine 370, cysteine 327–cysteine 350, and cysteine 360–cysteine 388. The active-site Charge relay system is threonine 364. A helical transmembrane segment spans residues leucine 416–leucine 436. Over glycine 437–leucine 439 the chain is Cytoplasmic.

This sequence belongs to the peptidase S1 family.

It is found in the membrane. Functionally, may be involved in proteolysis through its threonine endopeptidase activity. The protein is Probable threonine protease PRSS50 (Prss50) of Mus musculus (Mouse).